Reading from the N-terminus, the 534-residue chain is Ankyrin repeat domain-containing protein 34C (534 aa).

4 ANK repeats span residues 10 to 39 (TDGN…YINE), 43 to 80 (KGET…DPNI), 84 to 114 (SGKT…DPSL), and 118 to 147 (TGAS…AKGK). The disordered stretch occupies residues 159–205 (SGTKTTKQYLNVPPSPKVEDRQSPPLCTTPSDVELKTSGLASPPSEK). The residue at position 301 (Ser-301) is a Phosphoserine. Disordered stretches follow at residues 332–368 (YEKG…LKDP) and 384–403 (QPVG…GPLD). Ser-446 bears the Phosphoserine mark. The interval 480–503 (SKPASPLASGLKSMAPVAPNSPKR) is disordered.

This sequence belongs to the ANKRD34 family.

This is Ankyrin repeat domain-containing protein 34C (Ankrd34c) from Mus musculus (Mouse).